Consider the following 49-residue polypeptide: MRVGITLACTECKRRNYISTKNKKNDPDRIELKKYCSFCGRHTVHKETK.

It belongs to the bacterial ribosomal protein bL33 family.

The chain is Large ribosomal subunit protein bL33 from Moorella thermoacetica (strain ATCC 39073 / JCM 9320).